A 60-amino-acid chain; its full sequence is RICYSHKASLPRATKTCVENTCYKMFIRTHRQYISERGCGCPTAMWPYQTECCKGDRCNK.

Intrachain disulfides connect C3–C22, C17–C39, C41–C52, and C53–C58. Positions 41–48 are important for binding to L-type calcium channels; sequence CPTAMWPY.

This sequence belongs to the three-finger toxin family. Short-chain subfamily. L-type calcium blocker sub-subfamily. In terms of tissue distribution, expressed by the venom gland.

The protein localises to the secreted. Functionally, specific blocker of the voltage-dependent L-type calcium channel (Cav1/CACNA1). Inhibits cardiac contractions. In Dendroaspis polylepis polylepis (Black mamba), this protein is Toxin FS-2.